A 118-amino-acid chain; its full sequence is M-zodatoxin-Lt8p (118 aa).

A signal peptide spans 1-3; sequence AES. The propeptide occupies 4 to 43; the sequence is KPAESEHELAEVEEENELADLEDAVWLEHLADLSDLEEAR.

The protein belongs to the cationic peptide 06 (cytoinsectotoxin) family. In terms of tissue distribution, expressed by the venom gland.

The protein localises to the secreted. Functionally, insecticidal, cytolytic and antimicrobial peptide. Forms voltage-dependent, ion-permeable channels in membranes. At high concentration causes cell membrane lysis. This Lachesana tarabaevi (Spider) protein is M-zodatoxin-Lt8p (cit 1-15).